We begin with the raw amino-acid sequence, 331 residues long: MDKYLIKMPVKLNSIEVTEKKISAKEERVKQTNAAKKQIATNNNKRKNQDTPEMIKDKENAESENPPKRRSSRVTRSMRSMAEDGPASPEKEIPKKLPFIKYSGAIKYFTESQEIAASADEVMQWVEKQINMDVVPMAFDMEWPFSFQTGPGKSSVIQICVDERCCYVYQLSKLNKIPAALAALINHPKVRLHGVNIKADFRKLERDFPEMSAEPLIEKCVDLGVWCNQVCETGGRWSLERLANFIAKKAMDKSKKVRMSKWHVIPLDENQLMYAAIDVYIGQVIYREIEQRETVKLKNEAEFKEQNGDAAFKLVKGLGENFLSKINEVTI.

The interval 27–92 (ERVKQTNAAK…EDGPASPEKE (66 aa)) is disordered. Positions 31-43 (QTNAAKKQIATNN) are enriched in polar residues. The span at 47-67 (KNQDTPEMIKDKENAESENPP) shows a compositional bias: basic and acidic residues. Serine 80 and serine 88 each carry phosphoserine. Residues 118–290 (SADEVMQWVE…IGQVIYREIE (173 aa)) form the 3'-5' exonuclease domain. Positions 140, 142, and 278 each coordinate Mg(2+).

The protein belongs to the WRNexo family.

The protein localises to the nucleus. In terms of biological role, has exonuclease activity on both single-stranded and duplex templates bearing overhangs, but not blunt ended duplex DNA, and cleaves in a 3'-5' direction. Essential for the formation of DNA replication focal centers. Has an important role in maintaining genome stability. The sequence is that of 3'-5' exonuclease from Drosophila grimshawi (Hawaiian fruit fly).